Reading from the N-terminus, the 131-residue chain is SPbeta prophage-derived UPF0715 membrane protein YopD (131 aa).

Transmembrane regions (helical) follow at residues Val12–Val32, Ala38–Phe58, Leu75–Val95, and Phe108–Phe128.

The protein belongs to the UPF0715 family.

The protein localises to the cell membrane. The chain is SPbeta prophage-derived UPF0715 membrane protein YopD (yopD) from Bacillus subtilis (strain 168).